The chain runs to 59 residues: MKAFYGILIIFILISMLDLSQQVFINAKCRGSPECLPKCKEAIGKAAGKCMNGKCKCYP.

The first 22 residues, 1 to 22, serve as a signal peptide directing secretion; sequence MKAFYGILIIFILISMLDLSQQ. 3 disulfide bridges follow: Cys29/Cys50, Cys35/Cys55, and Cys39/Cys57. The tract at residues 48–55 is interaction with Ca(2+)-activated K(+) channels; it reads GKCMNGKC.

This sequence belongs to the short scorpion toxin superfamily. Potassium channel inhibitor family. Alpha-KTx 04 subfamily. As to expression, expressed by the venom gland.

It is found in the secreted. Its function is as follows. Potently blocks Kv1.1/KCNA1 (85%), Kv1.2/KCNA2 (91%), Kv1.3/KCNA3 (89%), Kv1.6/KCNA6 (94%), and Shaker (97%). The protein is Potassium channel toxin alpha-KTx 4.7 of Tityus stigmurus (Brazilian scorpion).